The sequence spans 336 residues: Probable long-chain-alcohol O-fatty-acyltransferase 8 (336 aa).

8 helical membrane-spanning segments follow: residues Ser7 to Ser27, Ser38 to Phe58, Ser59 to Phe79, Gly82 to Ile102, Trp117 to Tyr135, Leu152 to Gly172, Met228 to Ile248, and Pro284 to Phe304.

It belongs to the wax synthase family.

Its subcellular location is the membrane. The catalysed reaction is a long chain fatty alcohol + a fatty acyl-CoA = a wax ester + CoA. Its function is as follows. Catalyzes the final step in the synthesis of long-chain linear esters (waxes). The sequence is that of Probable long-chain-alcohol O-fatty-acyltransferase 8 from Arabidopsis thaliana (Mouse-ear cress).